The sequence spans 199 residues: Urease accessory protein UreG (199 aa).

8–15 (GPVGSGKT) is a GTP binding site.

Belongs to the SIMIBI class G3E GTPase family. UreG subfamily. Homodimer. UreH, UreF and UreG form a complex that acts as a GTP-hydrolysis-dependent molecular chaperone, activating the urease apoprotein by helping to assemble the nickel containing metallocenter of UreC. The UreE protein probably delivers the nickel.

It localises to the cytoplasm. Facilitates the functional incorporation of the urease nickel metallocenter. This process requires GTP hydrolysis, probably effectuated by UreG. This chain is Urease accessory protein UreG, found in Helicobacter pylori (strain P12).